The primary structure comprises 89 residues: Small ribosomal subunit protein uS15 (89 aa).

The protein belongs to the universal ribosomal protein uS15 family. In terms of assembly, part of the 30S ribosomal subunit. Forms a bridge to the 50S subunit in the 70S ribosome, contacting the 23S rRNA.

In terms of biological role, one of the primary rRNA binding proteins, it binds directly to 16S rRNA where it helps nucleate assembly of the platform of the 30S subunit by binding and bridging several RNA helices of the 16S rRNA. Functionally, forms an intersubunit bridge (bridge B4) with the 23S rRNA of the 50S subunit in the ribosome. This is Small ribosomal subunit protein uS15 from Solibacter usitatus (strain Ellin6076).